Consider the following 235-residue polypeptide: Proteasome subunit beta type-1 (235 aa).

Positions 1-20 (MSRLGFEQFPDYQVPGMKHP) are excised as a propeptide.

Belongs to the peptidase T1B family. In terms of assembly, the 26S proteasome consists of a 20S proteasome core and two 19S regulatory subunits. The 20S proteasome core is composed of 28 subunits that are arranged in four stacked rings, resulting in a barrel-shaped structure. The two end rings are each formed by seven alpha subunits, and the two central rings are each formed by seven beta subunits. The catalytic chamber with the active sites is on the inside of the barrel.

It is found in the cytoplasm. The protein localises to the nucleus. In terms of biological role, non-catalytic component of the proteasome, a multicatalytic proteinase complex which is characterized by its ability to cleave peptides with Arg, Phe, Tyr, Leu, and Glu adjacent to the leaving group at neutral or slightly basic pH. The proteasome has an ATP-dependent proteolytic activity. This Drosophila melanogaster (Fruit fly) protein is Proteasome subunit beta type-1 (Prosbeta6).